A 509-amino-acid chain; its full sequence is ATP synthase subunit alpha (509 aa).

Gly-169–Thr-176 is a binding site for ATP.

It belongs to the ATPase alpha/beta chains family. F-type ATPases have 2 components, CF(1) - the catalytic core - and CF(0) - the membrane proton channel. CF(1) has five subunits: alpha(3), beta(3), gamma(1), delta(1), epsilon(1). CF(0) has three main subunits: a(1), b(2) and c(9-12). The alpha and beta chains form an alternating ring which encloses part of the gamma chain. CF(1) is attached to CF(0) by a central stalk formed by the gamma and epsilon chains, while a peripheral stalk is formed by the delta and b chains.

The protein resides in the cell membrane. It carries out the reaction ATP + H2O + 4 H(+)(in) = ADP + phosphate + 5 H(+)(out). Functionally, produces ATP from ADP in the presence of a proton gradient across the membrane. The alpha chain is a regulatory subunit. This is ATP synthase subunit alpha from Lacticaseibacillus casei (strain BL23) (Lactobacillus casei).